The chain runs to 64 residues: Translation machinery-associated protein 7 homolog (64 aa).

The segment at 1–64 is disordered; the sequence is MTGREGGKKK…TGGIKKSGKK (64 aa). Positions 21 to 50 form a coiled coil; that stretch reads EMDEEDMAFKQKQKEQQKAMEAAKQKAAKG. Basic and acidic residues predominate over residues 27-44; that stretch reads MAFKQKQKEQQKAMEAAK.

This sequence belongs to the TMA7 family.

This is Translation machinery-associated protein 7 homolog from Aedes aegypti (Yellowfever mosquito).